The following is a 447-amino-acid chain: Na(+)/H(+) antiporter NhaA 2 (447 aa).

Transmembrane regions (helical) follow at residues 30 to 50 (FIHI…LAVL), 81 to 101 (LHKW…ALEL), 117 to 137 (LLSI…YLLL), 146 to 166 (GWGT…ALLG), 175 to 195 (IFML…VAIG), 199 to 219 (AVDW…RAMA), 220 to 240 (FLGV…WLVI), 315 to 335 (LLHP…NAGV), 350 to 370 (VFVG…WIAV), 383 to 403 (WGMV…ALFI), and 415 to 435 (AAKL…FLCL).

Belongs to the NhaA Na(+)/H(+) (TC 2.A.33) antiporter family.

The protein localises to the cell inner membrane. It carries out the reaction Na(+)(in) + 2 H(+)(out) = Na(+)(out) + 2 H(+)(in). Functionally, na(+)/H(+) antiporter that extrudes sodium in exchange for external protons. This Vibrio vulnificus (strain CMCP6) protein is Na(+)/H(+) antiporter NhaA 2.